The chain runs to 363 residues: MQTRLSNIKHLSRQELRQAIANLGEPAYRTRQIHQWIFSHRAATFEEMTTISLELRNKLADQFRIGFPILADCQQDGSANDPFSTVKLLLELDDNEKIETVLIPSENRMTACVSSQVGCPLQCRFCASGQTGFKRNLSADEIIDQVFSLNDFIRTKHESNEITNIVFMGMGEPLLNFENLKESIEVLSDQSYKFNLPQRKITISTVGIIPGINELGKSGLKTKLAISLHSASQETRESLIPVASEFSLTQLRKTLSEYTSQTGEPVTLVYMLLKGINDSVEDARLLVKFSRSFLCKINLIDYNSIINMKFKPVFNETKDMFIQHILDAGIHVTVRKSHGASINAACGQLAAKGTQKAENRNNL.

The active-site Proton acceptor is the Glu-99. Positions Ser-105 to Ser-341 constitute a Radical SAM core domain. A disulfide bridge connects residues Cys-112 and Cys-346. Residues Cys-119, Cys-123, and Cys-126 each contribute to the [4Fe-4S] cluster site. Residues Gly-171–Glu-172, Ser-204, Ser-227–His-229, and Asn-303 each bind S-adenosyl-L-methionine. Cys-346 acts as the S-methylcysteine intermediate in catalysis.

Belongs to the radical SAM superfamily. RlmN family. The cofactor is [4Fe-4S] cluster.

It is found in the cytoplasm. It carries out the reaction adenosine(2503) in 23S rRNA + 2 reduced [2Fe-2S]-[ferredoxin] + 2 S-adenosyl-L-methionine = 2-methyladenosine(2503) in 23S rRNA + 5'-deoxyadenosine + L-methionine + 2 oxidized [2Fe-2S]-[ferredoxin] + S-adenosyl-L-homocysteine. The catalysed reaction is adenosine(37) in tRNA + 2 reduced [2Fe-2S]-[ferredoxin] + 2 S-adenosyl-L-methionine = 2-methyladenosine(37) in tRNA + 5'-deoxyadenosine + L-methionine + 2 oxidized [2Fe-2S]-[ferredoxin] + S-adenosyl-L-homocysteine. Specifically methylates position 2 of adenine 2503 in 23S rRNA and position 2 of adenine 37 in tRNAs. The chain is Probable dual-specificity RNA methyltransferase RlmN from Chlorobium phaeobacteroides (strain DSM 266 / SMG 266 / 2430).